The sequence spans 188 residues: MMKFGFDIDDTLIRLREHAFHIYQRKLNQQVDIEKFHQLERVEIHELFSLNEQEGKQMWEDSLEEIYFTDCPIYPGALETVLQLEELGHEIYYITARPKLHGEQTKAWLRQNEFPVLDSHFFYGMKDNEKMEIIQGLDLDYYVDDKPTVLDTLTKTNTKLLIKDQSYNRNKKSFARIIDWHDFLQNKL.

The protein belongs to the 5'(3')-deoxyribonucleotidase family.

In Oceanobacillus iheyensis (strain DSM 14371 / CIP 107618 / JCM 11309 / KCTC 3954 / HTE831), this protein is Putative nucleotidase OB0422.